We begin with the raw amino-acid sequence, 155 residues long: 17.6 kDa class II heat shock protein (155 aa).

One can recognise a sHSP domain in the interval Asp-38 to Ala-155.

The protein belongs to the small heat shock protein (HSP20) family. As to quaternary structure, may form oligomeric structures.

The protein resides in the cytoplasm. The protein is 17.6 kDa class II heat shock protein (HSP17.6) of Arabidopsis thaliana (Mouse-ear cress).